A 581-amino-acid polypeptide reads, in one-letter code: Pentatricopeptide repeat-containing protein At1g34160 (581 aa).

PPR repeat units follow at residues 67–101, 108–142, 143–173, 174–208, 209–239, 240–270, 272–306, 307–341, and 342–372; these read LTNDWNAIIRGFAGSSHPSLAFSWYRSMLQQSSSS, DALTCSFTLKACARALCSSAMDQLHCQINRRGLSA, DSLLCTTLLDAYSKNGDLISAYKLFDEMPVR, DVASWNALIAGLVSGNRASEAMELYKRMETEGIRR, SEVTVVAALGACSHLGDVKEGENIFHGYSND, NVIVSNAAIDMYSKCGFVDKAYQVFEQFTGK, SVVTWNTMITGFAVHGEAHRALEIFDKLEDNGIKP, DDVSYLAALTACRHAGLVEYGLSVFNNMACKGVER, and NMKHYGCVVDLLSRAGRLREAHDIICSMSMI. Residues 377 to 452 are type E motif; it reads LWQSLLGASE…IPGLSYIEAK (76 aa). Residues 453 to 483 are type E(+) motif; that stretch reads GTIHEFYNSDKSHEQWREIYEKIDEIRFKIR. A type DYW motif region spans residues 484-581; sequence EDGYVAQTGL…DGSCSCRDFW (98 aa).

This sequence belongs to the PPR family. PCMP-H subfamily.

The protein is Pentatricopeptide repeat-containing protein At1g34160 (PCMP-H68) of Arabidopsis thaliana (Mouse-ear cress).